The following is a 420-amino-acid chain: Pre-mRNA-splicing factor RBM22 (420 aa).

Residues 159 to 186 form a C3H1-type zinc finger; sequence RNRPHICSFWVKGECKRGEECPYRHEKP. Residues 232–305 form the RRM domain; sequence TTLYVGGLGD…RRLNVKWGRS (74 aa). Disordered regions lie at residues 303-343 and 372-420; these read GRSQ…AAEE and APPP…HSSP. The segment covering 309-318 has biased composition (basic and acidic residues); sequence RGKEKDKEGT.

Belongs to the SLT11 family. As to quaternary structure, component of the pre-catalytic and catalytic spliceosome complexes. Component of the postcatalytic spliceosome P complex.

Its subcellular location is the nucleus. It localises to the cytoplasm. Functionally, required for pre-mRNA splicing as component of the activated spliceosome. Involved in the first step of pre-mRNA splicing. Binds directly to the internal stem-loop (ISL) domain of the U6 snRNA and to the pre-mRNA intron near the 5' splice site during the activation and catalytic phases of the spliceosome cycle. The sequence is that of Pre-mRNA-splicing factor RBM22 (RBM22) from Gallus gallus (Chicken).